The chain runs to 638 residues: Sorting nexin-41 (638 aa).

Over residues 1 to 14 (MDSDTSPNPFASSP) the composition is skewed to low complexity. Positions 1–69 (MDSDTSPNPF…MGATVPGPKP (69 aa)) are disordered. Residues 15–30 (PSSPSPRPSLPPPVPR) are compositionally biased toward pro residues. The PX domain occupies 84–201 (GEQVHIVDAL…HRFLEEDVSW (118 aa)). A 1,2-diacyl-sn-glycero-3-phospho-(1D-myo-inositol-3-phosphate)-binding residues include arginine 118, serine 120, lysine 144, and arginine 168. 3 disordered regions span residues 215 to 239 (KNPLHAPSHNPTFQPTTPTSPSEAP), 408 to 432 (LERGGSVLASPQLEPEAARDERERA), and 545 to 638 (PHPN…LGPL). Low complexity predominate over residues 225–239 (PTFQPTTPTSPSEAP). Over residues 423 to 432 (EAARDERERA) the composition is skewed to basic and acidic residues. The segment covering 552–562 (QTQTQVQSQQS) has biased composition (low complexity). A compositionally biased stretch (basic and acidic residues) spans 585–601 (MKNEIERVEIEIADKPL).

The protein belongs to the sorting nexin family.

Its subcellular location is the endosome membrane. The protein resides in the endomembrane system. Functionally, may be required for cytoplasm to vacuole transport (Cvt) and pexophagy. The protein is Sorting nexin-41 (SNX41) of Cryptococcus neoformans var. neoformans serotype D (strain B-3501A) (Filobasidiella neoformans).